Here is a 204-residue protein sequence, read N- to C-terminus: Large ribosomal subunit protein eL15 (204 aa).

Belongs to the eukaryotic ribosomal protein eL15 family. In terms of assembly, component of the large ribosomal subunit.

It localises to the cytoplasm. In terms of biological role, component of the large ribosomal subunit. The ribosome is a large ribonucleoprotein complex responsible for the synthesis of proteins in the cell. This chain is Large ribosomal subunit protein eL15 (rpl15), found in Hypophthalmichthys molitrix (Silver carp).